A 639-amino-acid chain; its full sequence is RNA polymerase II elongation factor ELL2 (639 aa).

4 disordered regions span residues 175-203, 291-326, 378-416, and 439-513; these read DTVP…SVSQ, LNPS…SDFI, PSTH…SFSQ, and PSSA…EGCT. Positions 291–317 are enriched in polar residues; it reads LNPSQNASTSRSESPLCSSKDAASSPQ. Residues 378–401 are compositionally biased toward low complexity; the sequence is PSTHLPVSNPPQTVNSNSNSPSTP. Positions 457–469 are enriched in basic residues; that stretch reads SHKKSKKKSKKHK. Positions 470–479 are enriched in basic and acidic residues; that stretch reads EKDQIKKLDI. Positions 480 to 490 are enriched in acidic residues; sequence ETMEEKEEDLQ. Serine 501 and serine 579 each carry phosphoserine. Residues 525–635 enclose the OCEL domain; it reads PDYLIKYIAI…LIGEFDQQQA (111 aa).

Belongs to the ELL/occludin family. In terms of assembly, component of the super elongation complex (SEC), at least composed of EAF1, EAF2, CDK9, MLLT3/AF9, AFF (AFF1 or AFF4), the P-TEFb complex and ELL (ELL, ELL2 or ELL3). Component of the little elongation complex (LEC), at least composed of ELL (ELL, ELL2 or ELL3), ZC3H8, ICE1 and ICE2. Interacts with AFF4; the interaction is direct and leads to stabilize ELL2 and prevent ELL2 ubiquitination. Interacts with EAF1 and EAF2. Ubiquitinated by SIAH1, leading to its degradation by the proteasome. Interaction with AFF4 stabilizes ELL2 and prevents ELL2 ubiquitination.

The protein resides in the nucleus. In terms of biological role, elongation factor component of the super elongation complex (SEC), a complex required to increase the catalytic rate of RNA polymerase II transcription by suppressing transient pausing by the polymerase at multiple sites along the DNA. Component of the little elongation complex (LEC), a complex required to regulate small nuclear RNA (snRNA) gene transcription by RNA polymerase II and III. Plays a role in immunoglobulin secretion in plasma cells: directs efficient alternative mRNA processing, influencing both proximal poly(A) site choice and exon skipping, as well as immunoglobulin heavy chain (IgH) alternative processing. Probably acts by regulating histone modifications accompanying transition from membrane-specific to secretory IgH mRNA expression. This chain is RNA polymerase II elongation factor ELL2 (Ell2), found in Mus musculus (Mouse).